The chain runs to 105 residues: Intermembrane phospholipid transport system binding protein MlaB (105 aa).

Positions 4-105 constitute an STAS domain; it reads WDLQKNNDKI…GLSDWIANFI (102 aa).

The complex is composed of two ATP-binding proteins (MlaF), two transmembrane proteins (MlaE), two cytoplasmic solute-binding proteins (MlaB) and six periplasmic solute-binding proteins (MlaD).

The protein localises to the cytoplasm. Functionally, part of the ABC transporter complex MlaFEDB, which is involved in a phospholipid transport pathway that maintains lipid asymmetry in the outer membrane by retrograde trafficking of phospholipids from the outer membrane to the inner membrane. MlaB plays critical roles in both the assembly and activity of the complex. May act by modulating MlaF structure and stability. The polypeptide is Intermembrane phospholipid transport system binding protein MlaB (Haemophilus influenzae (strain ATCC 51907 / DSM 11121 / KW20 / Rd)).